The following is a 367-amino-acid chain: Glutamate 5-kinase (367 aa).

Residue Lys10 participates in ATP binding. 3 residues coordinate substrate: Ser50, Asp137, and Asn149. ATP is bound by residues 169–170 and 211–217; these read TD and TGGMGTK. Residues 275–353 form the PUA domain; the sequence is AGEITVDDGA…QEISEILGYE (79 aa).

Belongs to the glutamate 5-kinase family.

The protein resides in the cytoplasm. It carries out the reaction L-glutamate + ATP = L-glutamyl 5-phosphate + ADP. The protein operates within amino-acid biosynthesis; L-proline biosynthesis; L-glutamate 5-semialdehyde from L-glutamate: step 1/2. With respect to regulation, proline-mediated feedback inhibition. In terms of biological role, catalyzes the transfer of a phosphate group to glutamate to form L-glutamate 5-phosphate. The chain is Glutamate 5-kinase from Serratia marcescens.